Consider the following 212-residue polypeptide: Elongation factor Ts (212 aa).

The tract at residues 82-85 (SDFV) is involved in Mg(2+) ion dislocation from EF-Tu.

This sequence belongs to the EF-Ts family.

It is found in the cytoplasm. Its function is as follows. Associates with the EF-Tu.GDP complex and induces the exchange of GDP to GTP. It remains bound to the aminoacyl-tRNA.EF-Tu.GTP complex up to the GTP hydrolysis stage on the ribosome. This is Elongation factor Ts from Solibacter usitatus (strain Ellin6076).